The sequence spans 123 residues: Small ribosomal subunit protein uS12 (123 aa).

3-methylthioaspartic acid is present on Asp-89.

Belongs to the universal ribosomal protein uS12 family. In terms of assembly, part of the 30S ribosomal subunit. Contacts proteins S8 and S17. May interact with IF1 in the 30S initiation complex.

Functionally, with S4 and S5 plays an important role in translational accuracy. Interacts with and stabilizes bases of the 16S rRNA that are involved in tRNA selection in the A site and with the mRNA backbone. Located at the interface of the 30S and 50S subunits, it traverses the body of the 30S subunit contacting proteins on the other side and probably holding the rRNA structure together. The combined cluster of proteins S8, S12 and S17 appears to hold together the shoulder and platform of the 30S subunit. The protein is Small ribosomal subunit protein uS12 of Anaeromyxobacter dehalogenans (strain 2CP-1 / ATCC BAA-258).